The primary structure comprises 263 residues: MPDARALGAAQLWIGTSWKMNKGLAESRGYARELAEYVAAKPPAGVQPFIIPSFTALTTVRDALGDDSPVLLGVQNAHWEDHGAWTGEVSVAQAKDAGAQIVEIGHSERREHFGETVETTRLKVAAALHHGLVPLLCIGESAENKQAGESSRFILEQAAGALEGLTDEHLARVLIAYEPIWAIGENGRPATVEELRQPFDDLAREYGCRTMGLLYGGSVNTDNAEDLLGIDHVTGLFIGRAAWQLPGYVRILEMAAAHPKAKA.

His-106 acts as the Electrophile in catalysis. Residue Glu-178 is the Proton acceptor of the active site.

It belongs to the triosephosphate isomerase family.

It carries out the reaction L-erythrulose 1-phosphate = D-erythrulose 4-phosphate. It functions in the pathway carbohydrate metabolism; L-threitol degradation. Functionally, catalyzes the isomerization of L-erythrulose-1P to D-erythrulose-4P. Involved in the degradation pathway of L-threitol, that allows M.smegmatis to grow on this compound as the sole carbon source. The protein is L-erythrulose-1-phosphate isomerase of Mycolicibacterium smegmatis (strain ATCC 700084 / mc(2)155) (Mycobacterium smegmatis).